Consider the following 361-residue polypeptide: Putative F-box protein At3g25460 (361 aa).

In terms of domain architecture, F-box spans 1–45 (MMMPELPEDLLVEILCRVPATSLKRLRSTCKLWNHLYNDKRFKSK).

This is Putative F-box protein At3g25460 from Arabidopsis thaliana (Mouse-ear cress).